The primary structure comprises 128 residues: Translation initiation factor 5A (128 aa).

Hypusine is present on lysine 35.

It belongs to the eIF-5A family.

The protein localises to the cytoplasm. Functions by promoting the formation of the first peptide bond. The sequence is that of Translation initiation factor 5A (eif5a) from Methanosarcina acetivorans (strain ATCC 35395 / DSM 2834 / JCM 12185 / C2A).